A 272-amino-acid polypeptide reads, in one-letter code: Nitrogenase iron protein (272 aa).

Position 8–15 (8–15 (GKGGIGKS)) interacts with ATP. [4Fe-4S] cluster is bound at residue Cys-94. Arg-97 carries the post-translational modification ADP-ribosylarginine; by dinitrogenase reductase ADP-ribosyltransferase. Cys-129 serves as a coordination point for [4Fe-4S] cluster.

This sequence belongs to the NifH/BchL/ChlL family. Homodimer. [4Fe-4S] cluster is required as a cofactor. Post-translationally, the reversible ADP-ribosylation of Arg-97 inactivates the nitrogenase reductase and regulates nitrogenase activity.

It carries out the reaction N2 + 8 reduced [2Fe-2S]-[ferredoxin] + 16 ATP + 16 H2O = H2 + 8 oxidized [2Fe-2S]-[ferredoxin] + 2 NH4(+) + 16 ADP + 16 phosphate + 6 H(+). In terms of biological role, the key enzymatic reactions in nitrogen fixation are catalyzed by the nitrogenase complex, which has 2 components: the iron protein and the molybdenum-iron protein. The chain is Nitrogenase iron protein from Clostridium acetobutylicum (strain ATCC 824 / DSM 792 / JCM 1419 / IAM 19013 / LMG 5710 / NBRC 13948 / NRRL B-527 / VKM B-1787 / 2291 / W).